Reading from the N-terminus, the 271-residue chain is Undecaprenyl-diphosphatase (271 aa).

The next 8 membrane-spanning stretches (helical) occupy residues 5–25 (LLIK…LPIS), 43–63 (FATM…VYYF), 80–100 (GFNL…IGIL), 109–129 (LFSP…MIVI), 145–165 (VSTS…FPGM), 186–206 (AEFS…FELV), 215–235 (LEWE…LIVV), and 246–266 (VLKP…FLIA).

It belongs to the UppP family.

Its subcellular location is the cell membrane. It catalyses the reaction di-trans,octa-cis-undecaprenyl diphosphate + H2O = di-trans,octa-cis-undecaprenyl phosphate + phosphate + H(+). Functionally, catalyzes the dephosphorylation of undecaprenyl diphosphate (UPP). Confers resistance to bacitracin. This is Undecaprenyl-diphosphatase from Caldanaerobacter subterraneus subsp. tengcongensis (strain DSM 15242 / JCM 11007 / NBRC 100824 / MB4) (Thermoanaerobacter tengcongensis).